Consider the following 202-residue polypeptide: Protein GrpE (202 aa).

Positions 1–14 are enriched in polar residues; the sequence is MENTQENPTSQNPT. Positions 1–58 are disordered; it reads MENTQENPTSQNPTPADEAARQAAEAASGEPQDQARQPAAAAGEQPAQAQPAGAEAAL. A compositionally biased stretch (low complexity) spans 21-58; it reads RQAAEAASGEPQDQARQPAAAAGEQPAQAQPAGAEAAL.

This sequence belongs to the GrpE family. Homodimer.

It is found in the cytoplasm. Functionally, participates actively in the response to hyperosmotic and heat shock by preventing the aggregation of stress-denatured proteins, in association with DnaK and GrpE. It is the nucleotide exchange factor for DnaK and may function as a thermosensor. Unfolded proteins bind initially to DnaJ; upon interaction with the DnaJ-bound protein, DnaK hydrolyzes its bound ATP, resulting in the formation of a stable complex. GrpE releases ADP from DnaK; ATP binding to DnaK triggers the release of the substrate protein, thus completing the reaction cycle. Several rounds of ATP-dependent interactions between DnaJ, DnaK and GrpE are required for fully efficient folding. This is Protein GrpE from Paraburkholderia phymatum (strain DSM 17167 / CIP 108236 / LMG 21445 / STM815) (Burkholderia phymatum).